A 177-amino-acid chain; its full sequence is Large ribosomal subunit protein uL6 (177 aa).

This sequence belongs to the universal ribosomal protein uL6 family. As to quaternary structure, part of the 50S ribosomal subunit.

Functionally, this protein binds to the 23S rRNA, and is important in its secondary structure. It is located near the subunit interface in the base of the L7/L12 stalk, and near the tRNA binding site of the peptidyltransferase center. The protein is Large ribosomal subunit protein uL6 of Rhodospirillum rubrum (strain ATCC 11170 / ATH 1.1.1 / DSM 467 / LMG 4362 / NCIMB 8255 / S1).